The chain runs to 36 residues: Photosystem I reaction center subunit VIII (36 aa).

Residues 8-28 (SLFVPLVGLVFPAIAMASLFL) traverse the membrane as a helical segment.

The protein belongs to the PsaI family.

It is found in the plastid. The protein resides in the chloroplast thylakoid membrane. May help in the organization of the PsaL subunit. In Brassica oleracea (Wild cabbage), this protein is Photosystem I reaction center subunit VIII.